We begin with the raw amino-acid sequence, 102 residues long: Small ribosomal subunit protein eS24 (102 aa).

Belongs to the eukaryotic ribosomal protein eS24 family.

This is Small ribosomal subunit protein eS24 from Methanococcus maripaludis (strain DSM 14266 / JCM 13030 / NBRC 101832 / S2 / LL).